The chain runs to 430 residues: Adenylosuccinate synthetase (430 aa).

GTP contacts are provided by residues 12 to 18 (GDEGKGK) and 40 to 42 (GHT). Asp-13 (proton acceptor) is an active-site residue. Positions 13 and 40 each coordinate Mg(2+). IMP contacts are provided by residues 13 to 16 (DEGK), 38 to 41 (NAGH), Thr-128, Arg-142, Gln-223, Thr-238, and Arg-302. Residue His-41 is the Proton donor of the active site. 298 to 304 (TTTGRPR) contributes to the substrate binding site. GTP contacts are provided by residues Arg-304, 330–332 (SID), and 412–414 (SVG).

This sequence belongs to the adenylosuccinate synthetase family. In terms of assembly, homodimer. Mg(2+) serves as cofactor.

The protein localises to the cytoplasm. It carries out the reaction IMP + L-aspartate + GTP = N(6)-(1,2-dicarboxyethyl)-AMP + GDP + phosphate + 2 H(+). Its pathway is purine metabolism; AMP biosynthesis via de novo pathway; AMP from IMP: step 1/2. In terms of biological role, plays an important role in the de novo pathway of purine nucleotide biosynthesis. Catalyzes the first committed step in the biosynthesis of AMP from IMP. The sequence is that of Adenylosuccinate synthetase from Streptococcus pyogenes serotype M5 (strain Manfredo).